A 573-amino-acid chain; its full sequence is Acetolactate synthase large subunit (573 aa).

Glu-51 provides a ligand contact to thiamine diphosphate. Residues Arg-153, His-261–Arg-282, and Asp-304–Asn-323 contribute to the FAD site. The tract at residues Gln-396–Phe-476 is thiamine pyrophosphate binding. Positions 447 and 474 each coordinate Mg(2+).

This sequence belongs to the TPP enzyme family. Dimer of large and small chains. It depends on Mg(2+) as a cofactor. Requires thiamine diphosphate as cofactor.

It catalyses the reaction 2 pyruvate + H(+) = (2S)-2-acetolactate + CO2. The protein operates within amino-acid biosynthesis; L-isoleucine biosynthesis; L-isoleucine from 2-oxobutanoate: step 1/4. It participates in amino-acid biosynthesis; L-valine biosynthesis; L-valine from pyruvate: step 1/4. This chain is Acetolactate synthase large subunit (ilvI), found in Haemophilus influenzae (strain ATCC 51907 / DSM 11121 / KW20 / Rd).